The chain runs to 416 residues: Glutamyl-tRNA reductase (416 aa).

Residues 48 to 51, Ser-104, 109 to 111, and Gln-115 each bind substrate; these read TCNR and EPQ. Cys-49 acts as the Nucleophile in catalysis. 184–189 contacts NADP(+); sequence GAGEMI.

It belongs to the glutamyl-tRNA reductase family. As to quaternary structure, homodimer.

It catalyses the reaction (S)-4-amino-5-oxopentanoate + tRNA(Glu) + NADP(+) = L-glutamyl-tRNA(Glu) + NADPH + H(+). Its pathway is porphyrin-containing compound metabolism; protoporphyrin-IX biosynthesis; 5-aminolevulinate from L-glutamyl-tRNA(Glu): step 1/2. In terms of biological role, catalyzes the NADPH-dependent reduction of glutamyl-tRNA(Glu) to glutamate 1-semialdehyde (GSA). The sequence is that of Glutamyl-tRNA reductase from Dechloromonas aromatica (strain RCB).